A 153-amino-acid chain; its full sequence is UPF0756 membrane protein BCQ_4399 (153 aa).

The next 4 helical transmembrane spans lie at 8–28 (FLFILLIIGLIAKNQSLTVAI), 54–74 (LGVTVITIAVLVPIATGEIGF), 87–107 (WIALASGVAVALLAKGGVQLL), and 117–137 (LVFGTIIAVALFNGVAVGPLI).

This sequence belongs to the UPF0756 family.

The protein resides in the cell membrane. The polypeptide is UPF0756 membrane protein BCQ_4399 (Bacillus cereus (strain Q1)).